We begin with the raw amino-acid sequence, 857 residues long: Facilitated trehalose transporter Tret1-1 (857 aa).

2 disordered regions span residues 1–27 and 92–203; these read MSGR…GKLK and SFRP…KATS. Residues 1 to 392 are Cytoplasmic-facing; that stretch reads MSGRDNRGAG…VYRPTTNPIY (392 aa). The segment covering 134–143 has biased composition (basic and acidic residues); that stretch reads EIREHRDRQQ. A compositionally biased stretch (polar residues) spans 171–181; the sequence is GNSNTNSNKAA. Residues Ser248, Ser249, Ser250, Ser320, and Ser322 each carry the phosphoserine modification. The disordered stretch occupies residues 327–346; the sequence is LTSRQHFQQQRSISTDSRKS. The segment covering 330-341 has biased composition (polar residues); that stretch reads RQHFQQQRSIST. The helical transmembrane segment at 393 to 413 threads the bilayer; sequence IWTQVLAALSVSLGSLVVGFV. Topologically, residues 414 to 440 are extracellular; that stretch reads SAYTSPALVSMTDRNITSFEVTQDAGS. An N-linked (GlcNAc...) asparagine glycan is attached at Asn428. The chain crosses the membrane as a helical span at residues 441–461; the sequence is WVGGIMPLAALAGGITGGPLI. Residues 462 to 473 are Cytoplasmic-facing; that stretch reads EYLGRRNTILAT. The helical transmembrane segment at 474 to 494 threads the bilayer; that stretch reads AVPFIVSSLLIACAVNVAMVL. The Extracellular portion of the chain corresponds to 495-497; sequence CGR. A helical transmembrane segment spans residues 498-518; sequence FLAGFCVGIASLSLPVYLGET. Residues 519-528 are Cytoplasmic-facing; sequence VQPEVRGTLG. The helical transmembrane segment at 529 to 549 threads the bilayer; the sequence is LLPTAFGNIGILLCFVAGSFM. N-linked (GlcNAc...) asparagine glycosylation occurs at Asn550. Over 550–552 the chain is Extracellular; that stretch reads NWS. A helical transmembrane segment spans residues 553–573; sequence MLAFLGAALPVPFLILMFLIP. Residues 574–636 lie on the Cytoplasmic side of the membrane; sequence ETPRWFVGRG…ELLKLNNLKP (63 aa). Residues 637-657 traverse the membrane as a helical segment; sequence LSISLGLMFFQQFSGINAVIF. At 658–673 the chain is on the extracellular side; that stretch reads YTVQIFKDAGSTIDGN. The helical transmembrane segment at 674 to 694 threads the bilayer; sequence LCTIIVGIVNFLATFIGIVLI. Over 695–700 the chain is Cytoplasmic; sequence DRAGRK. A helical transmembrane segment spans residues 701–721; sequence ILLYVSDIAMVLTLFVLGGFF. Residues 722–740 are Extracellular-facing; that stretch reads YCKANGPDVSHLGWLPLTC. Residues 741 to 761 form a helical membrane-spanning segment; the sequence is FVIYILGFSLGFGPIPWLMMG. The Cytoplasmic segment spans residues 762–767; that stretch reads EILPAK. Residues 768-788 traverse the membrane as a helical segment; the sequence is IRGSAASVATAFNWFCTFVVT. Topologically, residues 789 to 801 are extracellular; that stretch reads KTFQDLTVAMGAH. Residues 802–822 form a helical membrane-spanning segment; the sequence is GAFWLFGAICFVGLFFVIIYV. Residues 823–857 lie on the Cytoplasmic side of the membrane; the sequence is PETQGKTLEDIERKMMGRVRRMSSVANIKPLSFNM. A phosphoserine mark is found at Ser845 and Ser846.

It belongs to the major facilitator superfamily. Sugar transporter (TC 2.A.1.1) family. Trehalose transporter subfamily.

It localises to the cell membrane. In terms of biological role, low-capacity facilitative transporter for trehalose. Does not transport maltose, sucrose or lactose. Mediates the bidirectional transfer of trehalose. Responsible for the transport of trehalose synthesized in the fat body and the incorporation of trehalose into other tissues that require a carbon source, thereby regulating trehalose levels in the hemolymph. The chain is Facilitated trehalose transporter Tret1-1 from Drosophila sechellia (Fruit fly).